We begin with the raw amino-acid sequence, 567 residues long: Glucose-6-phosphate isomerase, cytosolic B (567 aa).

D-glucose 6-phosphate is bound by residues 156–157 (GS), 212–217 (SKTFTT), Gln356, Glu360, His391, and Lys516. Glu360 functions as the Proton donor in the catalytic mechanism. Residues His391 and Lys516 contribute to the active site.

This sequence belongs to the GPI family. As to quaternary structure, homodimer.

It is found in the cytoplasm. The enzyme catalyses alpha-D-glucose 6-phosphate = beta-D-fructose 6-phosphate. It participates in carbohydrate degradation; glycolysis; D-glyceraldehyde 3-phosphate and glycerone phosphate from D-glucose: step 2/4. Functionally, catalyzes the conversion of glucose-6-phosphate to fructose-6-phosphate, the second step in glycolysis, and the reverse reaction during gluconeogenesis. This chain is Glucose-6-phosphate isomerase, cytosolic B, found in Oryza sativa subsp. japonica (Rice).